A 297-amino-acid polypeptide reads, in one-letter code: Acetylglutamate kinase (297 aa).

Residues 73–74, Arg-95, and Asn-188 contribute to the substrate site; that span reads GG.

Belongs to the acetylglutamate kinase family. ArgB subfamily.

It is found in the cytoplasm. The catalysed reaction is N-acetyl-L-glutamate + ATP = N-acetyl-L-glutamyl 5-phosphate + ADP. The protein operates within amino-acid biosynthesis; L-arginine biosynthesis; N(2)-acetyl-L-ornithine from L-glutamate: step 2/4. Functionally, catalyzes the ATP-dependent phosphorylation of N-acetyl-L-glutamate. The chain is Acetylglutamate kinase from Nostoc sp. (strain PCC 7120 / SAG 25.82 / UTEX 2576).